The following is a 130-amino-acid chain: Protein NrdI (130 aa).

Belongs to the NrdI family.

Functionally, probably involved in ribonucleotide reductase function. This Bartonella bacilliformis (strain ATCC 35685 / KC583 / Herrer 020/F12,63) protein is Protein NrdI.